We begin with the raw amino-acid sequence, 409 residues long: Putative integrase/recombinase y4rA (409 aa).

Residues 112–197 (SAVEQHVQAY…ALRSFLSYAR (86 aa)) enclose the Core-binding (CB) domain. Positions 220–402 (SIPRAIGRDD…DLDALRTLAL (183 aa)) constitute a Tyr recombinase domain. Catalysis depends on residues Arg-260, Lys-284, His-354, Arg-357, and His-380. The O-(3'-phospho-DNA)-tyrosine intermediate role is filled by Tyr-389.

Belongs to the 'phage' integrase family.

The protein is Putative integrase/recombinase y4rA of Sinorhizobium fredii (strain NBRC 101917 / NGR234).